We begin with the raw amino-acid sequence, 150 residues long: Nucleoside diphosphate kinase (150 aa).

Positions 9, 57, 85, 91, 102, and 112 each coordinate ATP. His115 (pros-phosphohistidine intermediate) is an active-site residue.

This sequence belongs to the NDK family. Homotetramer. Mg(2+) is required as a cofactor.

Its subcellular location is the cytoplasm. The enzyme catalyses a 2'-deoxyribonucleoside 5'-diphosphate + ATP = a 2'-deoxyribonucleoside 5'-triphosphate + ADP. It carries out the reaction a ribonucleoside 5'-diphosphate + ATP = a ribonucleoside 5'-triphosphate + ADP. In terms of biological role, major role in the synthesis of nucleoside triphosphates other than ATP. The ATP gamma phosphate is transferred to the NDP beta phosphate via a ping-pong mechanism, using a phosphorylated active-site intermediate. This Thermosynechococcus vestitus (strain NIES-2133 / IAM M-273 / BP-1) protein is Nucleoside diphosphate kinase.